The following is a 205-amino-acid chain: Small ribosomal subunit protein uS4 (205 aa).

Over residues 1–12 (MSKRVQAKHKLD) the composition is skewed to basic residues. Residues 1-49 (MSKRVQAKHKLDRRMGQNIWGRPKSPVNRREYGPGQHGQRRKGKMSDFG) form a disordered region. The S4 RNA-binding domain occupies 94–155 (RRLDAVVYRS…ASRQLEIVVV (62 aa)).

The protein belongs to the universal ribosomal protein uS4 family. As to quaternary structure, part of the 30S ribosomal subunit. Contacts protein S5. The interaction surface between S4 and S5 is involved in control of translational fidelity.

In terms of biological role, one of the primary rRNA binding proteins, it binds directly to 16S rRNA where it nucleates assembly of the body of the 30S subunit. Its function is as follows. With S5 and S12 plays an important role in translational accuracy. The sequence is that of Small ribosomal subunit protein uS4 from Methylorubrum populi (strain ATCC BAA-705 / NCIMB 13946 / BJ001) (Methylobacterium populi).